Reading from the N-terminus, the 549-residue chain is S-methyl thiourocanate hydratase (549 aa).

Residues Met-49, Gly-173, Met-174, Gly-175, Asp-193, Ser-198, Asn-239, Ala-240, Gln-260, Val-270, and Tyr-318 each contribute to the NAD(+) site.

The protein belongs to the urocanase family. S-methyl thiourocanate hydratase subfamily. It depends on NAD(+) as a cofactor.

The enzyme catalyses S-methyl-(E)-thiourocanate + H2O = S-methyl-thiohydantoin-5-propanoate. Its function is as follows. Hydratase involved in the catabolism of S-methyl ergothioneine. Catalyzes the 1,4-addition of H(2)O to S-methyl thiourocanate, leading to the formation of S-methyl-thiohydantoin-5-propanoate, the second step in S-methyl ergothioneine degradation. Cannot use urocanate or thiourocanate as substrate. The sequence is that of S-methyl thiourocanate hydratase from Variovorax sp. (strain JCM 16519 / RA8).